The following is a 569-amino-acid chain: uncharacterized protein (569 aa).

The N-terminal stretch at 1-21 is a signal peptide; sequence MLCVMMLLFSAIASFPVSAQA. The Extracellular segment spans residues 22-530; sequence KDQDAGILII…DHHRQTPLEK (509 aa). The chain crosses the membrane as a helical span at residues 531–551; it reads ALWILSAVVLLFVIMFVSYTF. At 552–569 the chain is on the cytoplasmic side; that stretch reads YLRATLKKRIFKERRSLG.

Its subcellular location is the cell membrane. This is an uncharacterized protein from Bacillus subtilis (strain 168).